A 215-amino-acid polypeptide reads, in one-letter code: 3-isopropylmalate dehydratase small subunit (215 aa).

Belongs to the LeuD family. LeuD type 1 subfamily. As to quaternary structure, heterodimer of LeuC and LeuD.

The catalysed reaction is (2R,3S)-3-isopropylmalate = (2S)-2-isopropylmalate. It participates in amino-acid biosynthesis; L-leucine biosynthesis; L-leucine from 3-methyl-2-oxobutanoate: step 2/4. Functionally, catalyzes the isomerization between 2-isopropylmalate and 3-isopropylmalate, via the formation of 2-isopropylmaleate. This is 3-isopropylmalate dehydratase small subunit from Xanthomonas campestris pv. campestris (strain 8004).